The chain runs to 393 residues: Cysteine protease ATG4B (393 aa).

Met-1 carries the N-acetylmethionine modification. Position 34 is a phosphoserine (Ser-34). Cys-74 functions as the Nucleophile in the catalytic mechanism. An S-nitrosocysteine modification is found at Cys-189. Active-site residues include Asp-278 and His-280. An S-nitrosocysteine mark is found at Cys-292 and Cys-301. Cys-292 and Cys-361 are joined by a disulfide. A phosphoserine mark is found at Ser-316 and Ser-383. The LIR signature appears at 388–391; the sequence is FEIL. Ser-392 is subject to Phosphoserine.

The protein belongs to the peptidase C54 family. In terms of assembly, interacts with PFKP; promoting phosphorylation of ATG4B at Ser-34. Interacts with GBP7. Post-translationally, phosphorylation at Ser-383 and Ser-392 promotes autophagy by increasing protein delipidation activity without affecting proteolytic activation of ATG8 proteins. Phosphorylation at Ser-316 by ULK1 inhibits autophagy by decreasing both proteolytic activation and delipidation activities. Phosphorylation at Ser-316 is dephosphorylated by protein phosphatase 2A (PP2A). Phosphorylation at Ser-34 by AKT2 promotes its hydrolase activity, leading to increased proteolytic activation and delipidation of ATG8 family proteins. Phosphorylation at Ser-34 by AKT1 promotes mitochondrial localization and inhibition of the F1F0-ATP synthase activity, leading to elevation of mitochondrial reactive oxygen species (ROS). Ubiquitinated by RNF5, leading to its degradation by the proteasome. In terms of processing, S-nitrosylation at Cys-189 and Cys-292 in response to high glucose decreases both proteolytic activation and delipidation activities. Post-translationally, O-glycosylated by OGT, leading to increase protease activity, thereby promoting the proteolytic activation of ATG8 family proteins. Forms reversible intrachain disulfide bonds in response to oxidative stress. Forms interchain disulfide bonds, leading to formation of homooligomers in response to oxidation.

The protein resides in the cytoplasm. Its subcellular location is the cytosol. It is found in the cytoplasmic vesicle. The protein localises to the autophagosome. It localises to the endoplasmic reticulum. The protein resides in the mitochondrion. The catalysed reaction is [protein]-C-terminal L-amino acid-glycyl-phosphatidylethanolamide + H2O = [protein]-C-terminal L-amino acid-glycine + a 1,2-diacyl-sn-glycero-3-phosphoethanolamine. It carries out the reaction [protein]-C-terminal L-amino acid-glycyl-phosphatidylserine + H2O = [protein]-C-terminal L-amino acid-glycine + a 1,2-diacyl-sn-glycero-3-phospho-L-serine. Its activity is regulated as follows. Inhibited by N-ethylmaleimide. Redox-regulated during autophagy since reducing conditions activate ATG4A whereas an oxidizing environment such as the presence of H(2)O(2) inhibits its activity. The cysteine protease activity compounds is inhibited by styrylquinoline compounds 4-28 and LV-320. Its function is as follows. Cysteine protease that plays a key role in autophagy by mediating both proteolytic activation and delipidation of ATG8 family proteins. Required for canonical autophagy (macroautophagy), non-canonical autophagy as well as for mitophagy. The protease activity is required for proteolytic activation of ATG8 family proteins: cleaves the C-terminal amino acid of ATG8 proteins MAP1LC3A, MAP1LC3B, MAP1LC3C, GABARAPL1, GABARAPL2 and GABARAP, to reveal a C-terminal glycine. Exposure of the glycine at the C-terminus is essential for ATG8 proteins conjugation to phosphatidylethanolamine (PE) and insertion to membranes, which is necessary for autophagy. Protease activity is also required to counteract formation of high-molecular weight conjugates of ATG8 proteins (ATG8ylation): acts as a deubiquitinating-like enzyme that removes ATG8 conjugated to other proteins, such as ATG3. In addition to the protease activity, also mediates delipidation of ATG8 family proteins. Catalyzes delipidation of PE-conjugated forms of ATG8 proteins during macroautophagy. Also involved in non-canonical autophagy, a parallel pathway involving conjugation of ATG8 proteins to single membranes at endolysosomal compartments, by catalyzing delipidation of ATG8 proteins conjugated to phosphatidylserine (PS). Compared to other members of the family (ATG4A, ATG4C or ATG4C), constitutes the major protein for proteolytic activation of ATG8 proteins, while it displays weaker delipidation activity than other ATG4 paralogs. Involved in phagophore growth during mitophagy independently of its protease activity and of ATG8 proteins: acts by regulating ATG9A trafficking to mitochondria and promoting phagophore-endoplasmic reticulum contacts during the lipid transfer phase of mitophagy. This chain is Cysteine protease ATG4B, found in Mus musculus (Mouse).